The chain runs to 278 residues: Type II restriction enzyme AgeI (278 aa).

The protein belongs to the BsaWI type II restriction endonuclease family.

It catalyses the reaction Endonucleolytic cleavage of DNA to give specific double-stranded fragments with terminal 5'-phosphates.. In terms of biological role, a P subtype restriction enzyme that recognizes the double-stranded sequence 5'-ACCGGT-3' and cleaves after A-1. The protein is Type II restriction enzyme AgeI (ageIR) of Thalassovita gelatinovora (Thalassobius gelatinovorus).